We begin with the raw amino-acid sequence, 131 residues long: Large ribosomal subunit protein bL17 (131 aa).

It belongs to the bacterial ribosomal protein bL17 family. In terms of assembly, part of the 50S ribosomal subunit. Contacts protein L32.

This Shewanella sp. (strain ANA-3) protein is Large ribosomal subunit protein bL17.